Consider the following 148-residue polypeptide: Nucleoside diphosphate kinase 1 (148 aa).

Positions 9, 57, 85, 91, 102, and 112 each coordinate ATP. The Pros-phosphohistidine intermediate role is filled by His-115.

Belongs to the NDK family. Mg(2+) is required as a cofactor. In terms of processing, the N-terminus is blocked.

The enzyme catalyses a 2'-deoxyribonucleoside 5'-diphosphate + ATP = a 2'-deoxyribonucleoside 5'-triphosphate + ADP. It catalyses the reaction a ribonucleoside 5'-diphosphate + ATP = a ribonucleoside 5'-triphosphate + ADP. Functionally, major role in the synthesis of nucleoside triphosphates other than ATP. The ATP gamma phosphate is transferred to the NDP beta phosphate via a ping-pong mechanism, using a phosphorylated active-site intermediate. This Spinacia oleracea (Spinach) protein is Nucleoside diphosphate kinase 1 (NDPK1).